We begin with the raw amino-acid sequence, 362 residues long: Sterol-4-alpha-carboxylate 3-dehydrogenase, decarboxylating (362 aa).

An N-acetylmethionine modification is found at M1. Y161 functions as the Proton acceptor in the catalytic mechanism. Position 165 (K165) interacts with NAD(+). A helical transmembrane segment spans residues 287-307; the sequence is WMAYYLAFLLSLLVMVVSPLI. A Prevents secretion from ER motif is present at residues 359-362; sequence RKDK.

It belongs to the 3-beta-HSD family. In terms of assembly, homodimer.

It localises to the endoplasmic reticulum membrane. Its subcellular location is the lipid droplet. It carries out the reaction a 3beta-hydroxysteroid-4alpha-carboxylate + NADP(+) = a 3-oxosteroid + CO2 + NADPH. It catalyses the reaction a 3beta-hydroxysteroid-4alpha-carboxylate + NAD(+) = a 3-oxosteroid + CO2 + NADH. The enzyme catalyses 4alpha-carboxyzymosterol + NADP(+) = zymosterone + CO2 + NADPH. The catalysed reaction is 4alpha-carboxy-4beta-methyl-5alpha-cholest-8-en-3beta-ol + NADP(+) = 4alpha-methyl-5alpha-cholest-8-en-3-one + CO2 + NADPH. It carries out the reaction 4alpha-carboxy-5alpha-cholest-8-ene-3beta-ol + NADP(+) = 5alpha-cholest-8-en-3-one + CO2 + NADPH. It catalyses the reaction 4beta-methylzymosterol-4alpha-carboxylate + NADP(+) = 3-dehydro-4-methylzymosterol + CO2 + NADPH. The enzyme catalyses 4beta-methylzymosterol-4alpha-carboxylate + NAD(+) = 3-dehydro-4-methylzymosterol + CO2 + NADH. The catalysed reaction is 4alpha-carboxy-5alpha-cholest-8-ene-3beta-ol + NAD(+) = 5alpha-cholest-8-en-3-one + CO2 + NADH. It carries out the reaction 4alpha-carboxy-4beta-methyl-5alpha-cholest-8-en-3beta-ol + NAD(+) = 4alpha-methyl-5alpha-cholest-8-en-3-one + CO2 + NADH. It catalyses the reaction 4alpha-carboxyzymosterol + NAD(+) = zymosterone + CO2 + NADH. The protein operates within steroid biosynthesis; zymosterol biosynthesis; zymosterol from lanosterol: step 4/6. Its function is as follows. Catalyzes the NAD(P)(+)-dependent oxidative decarboxylation of the C4 methyl groups of 4-alpha-carboxysterols in post-squalene cholesterol biosynthesis. Plays a role in the regulation of the endocytic trafficking of EGFR. This is Sterol-4-alpha-carboxylate 3-dehydrogenase, decarboxylating (Nsdhl) from Mus musculus (Mouse).